Consider the following 339-residue polypeptide: MQKLKVFLSDSLNPHLNLATEEWIFHNLDPSQQVLFLWRNEETVVIGRNQNPWSECNLAKMKDEKVHLARRTTGGGAVFHDLQNTNFTFLSPKESYKRENNVQIIFDALKTFGIQGEASGRNDLLIPFPDGPRKFSGSAYREKKDRAFHHGTLLLNTDLTRLGNYLTPNPKKLQAKGKESVRARVANLTEVSPGINHDQIVTTMVKSFENFYAGKAEVESLTMESLKLIPELKEQYEQLSSWEWLYGNTLEFSHKMDEYLTLGFFDFHFKVEDGQIKDLKIYTDCLYPQVIEDLTESLRGKAYRGDAVREALMSVRGKHTELNLGLSEVEEWLCKNIEI.

The region spanning 29–216 (DPSQQVLFLW…SFENFYAGKA (188 aa)) is the BPL/LPL catalytic domain. Residues arginine 71, 76 to 79 (GAVF), and lysine 134 contribute to the ATP site. Lysine 134 contributes to the (R)-lipoate binding site.

Belongs to the LplA family. As to quaternary structure, monomer.

It is found in the cytoplasm. The catalysed reaction is L-lysyl-[lipoyl-carrier protein] + (R)-lipoate + ATP = N(6)-[(R)-lipoyl]-L-lysyl-[lipoyl-carrier protein] + AMP + diphosphate + H(+). It participates in protein modification; protein lipoylation via exogenous pathway; protein N(6)-(lipoyl)lysine from lipoate: step 1/2. The protein operates within protein modification; protein lipoylation via exogenous pathway; protein N(6)-(lipoyl)lysine from lipoate: step 2/2. Its function is as follows. Catalyzes both the ATP-dependent activation of exogenously supplied lipoate to lipoyl-AMP and the transfer of the activated lipoyl onto the lipoyl domains of lipoate-dependent enzymes. This is Lipoate-protein ligase A from Bdellovibrio bacteriovorus (strain ATCC 15356 / DSM 50701 / NCIMB 9529 / HD100).